Reading from the N-terminus, the 904-residue chain is NADH-quinone oxidoreductase subunit G (904 aa).

The 2Fe-2S ferredoxin-type domain maps to 1–83; sequence MATIHVDGKE…GSWISIDDEE (83 aa). Residues Cys-34, Cys-45, Cys-48, and Cys-67 each coordinate [2Fe-2S] cluster. The region spanning 83-122 is the 4Fe-4S His(Cys)3-ligated-type domain; the sequence is EAKVFRASVVEWLMTNHPHDCPVCEEGGHCHLQDMTVMTG. His-99, Cys-103, Cys-106, Cys-112, Cys-151, Cys-154, Cys-157, Cys-201, Cys-228, Cys-231, Cys-235, and Cys-263 together coordinate [4Fe-4S] cluster. The 4Fe-4S Mo/W bis-MGD-type domain maps to 221–277; sequence MQFSPSICHGCSSGCNISPGERYGELRRIENRFNGSVNQYFLCDRGRFGYGYVNRKD.

Belongs to the complex I 75 kDa subunit family. In terms of assembly, composed of 13 different subunits. Subunits NuoCD, E, F, and G constitute the peripheral sector of the complex. It depends on [2Fe-2S] cluster as a cofactor. Requires [4Fe-4S] cluster as cofactor.

The enzyme catalyses a quinone + NADH + 5 H(+)(in) = a quinol + NAD(+) + 4 H(+)(out). In terms of biological role, NDH-1 shuttles electrons from NADH, via FMN and iron-sulfur (Fe-S) centers, to quinones in the respiratory chain. The immediate electron acceptor for the enzyme in this species is believed to be ubiquinone. Couples the redox reaction to proton translocation (for every two electrons transferred, four hydrogen ions are translocated across the cytoplasmic membrane), and thus conserves the redox energy in a proton gradient. Required for plants roots colonization. The polypeptide is NADH-quinone oxidoreductase subunit G (nuoG) (Pseudomonas fluorescens).